The chain runs to 418 residues: Adenylosuccinate synthetase (418 aa).

GTP contacts are provided by residues 12 to 18 (GDEGKGK) and 40 to 42 (GHT). The active-site Proton acceptor is the aspartate 13. Mg(2+) contacts are provided by aspartate 13 and glycine 40. Residues 13–16 (DEGK), 38–41 (NAGH), threonine 128, arginine 142, glutamine 221, threonine 236, and arginine 299 contribute to the IMP site. Histidine 41 acts as the Proton donor in catalysis. A substrate-binding site is contributed by 295–301 (ATTGRNR). Residues arginine 301, 327 to 329 (KAD), and 399 to 401 (SYG) each bind GTP.

This sequence belongs to the adenylosuccinate synthetase family. In terms of assembly, homodimer. The cofactor is Mg(2+).

It localises to the cytoplasm. The enzyme catalyses IMP + L-aspartate + GTP = N(6)-(1,2-dicarboxyethyl)-AMP + GDP + phosphate + 2 H(+). Its pathway is purine metabolism; AMP biosynthesis via de novo pathway; AMP from IMP: step 1/2. Its function is as follows. Plays an important role in the de novo pathway of purine nucleotide biosynthesis. Catalyzes the first committed step in the biosynthesis of AMP from IMP. The polypeptide is Adenylosuccinate synthetase (Finegoldia magna (strain ATCC 29328 / DSM 20472 / WAL 2508) (Peptostreptococcus magnus)).